The primary structure comprises 276 residues: Putative E3 ubiquitin-protein ligase SINA-like 9 (276 aa).

The RING-type zinc-finger motif lies at 38 to 74 (CPICCEALTSPIFQCDNGHLACGSCCPKLSNKCPACT). The SBD stretch occupies residues 88 to 274 (VLESILIPCP…MQVFIIENVD (187 aa)). An SIAH-type zinc finger spans residues 91 to 149 (SILIPCPNVRFGCTKSFFYGKESAHEKECIFSQCSCPSSVCDYTGSYKDLYAHYKLTHS). Positions 96, 103, 115, 119, 126, 131, 143, and 148 each coordinate Zn(2+).

It belongs to the SINA (Seven in absentia) family.

The catalysed reaction is S-ubiquitinyl-[E2 ubiquitin-conjugating enzyme]-L-cysteine + [acceptor protein]-L-lysine = [E2 ubiquitin-conjugating enzyme]-L-cysteine + N(6)-ubiquitinyl-[acceptor protein]-L-lysine.. It functions in the pathway protein modification; protein ubiquitination. E3 ubiquitin-protein ligase that mediates ubiquitination and subsequent proteasomal degradation of target proteins. E3 ubiquitin ligases accept ubiquitin from an E2 ubiquitin-conjugating enzyme in the form of a thioester and then directly transfers the ubiquitin to targeted substrates. It probably triggers the ubiquitin-mediated degradation of different substrates. In Arabidopsis thaliana (Mouse-ear cress), this protein is Putative E3 ubiquitin-protein ligase SINA-like 9.